Reading from the N-terminus, the 437-residue chain is Chromosomal replication initiator protein DnaA (437 aa).

Residues 1-74 (MNLAWNKILE…EACGDKIPVE (74 aa)) are domain I, interacts with DnaA modulators. The segment at 74–98 (EILIETKATSPLQSFLEKSFDQKDF) is domain II. The tract at residues 99–315 (QFNPDYTFET…GALNDIYLYK (217 aa)) is domain III, AAA+ region. The ATP site is built by Gly-142, Gly-144, Lys-145, and Thr-146. A domain IV, binds dsDNA region spans residues 316-437 (KSYSLLFLNL…ERISSKYKLQ (122 aa)).

This sequence belongs to the DnaA family. As to quaternary structure, oligomerizes as a right-handed, spiral filament on DNA at oriC.

It localises to the cytoplasm. Its function is as follows. Plays an essential role in the initiation and regulation of chromosomal replication. ATP-DnaA binds to the origin of replication (oriC) to initiate formation of the DNA replication initiation complex once per cell cycle. Binds the DnaA box (a 9 base pair repeat at the origin) and separates the double-stranded (ds)DNA. Forms a right-handed helical filament on oriC DNA; dsDNA binds to the exterior of the filament while single-stranded (ss)DNA is stabiized in the filament's interior. The ATP-DnaA-oriC complex binds and stabilizes one strand of the AT-rich DNA unwinding element (DUE), permitting loading of DNA polymerase. After initiation quickly degrades to an ADP-DnaA complex that is not apt for DNA replication. Binds acidic phospholipids. This is Chromosomal replication initiator protein DnaA from Leptospira borgpetersenii serovar Hardjo-bovis (strain JB197).